The primary structure comprises 253 residues: Phosphoribosylaminoimidazole-succinocarboxamide synthase (253 aa).

Belongs to the SAICAR synthetase family.

The enzyme catalyses 5-amino-1-(5-phospho-D-ribosyl)imidazole-4-carboxylate + L-aspartate + ATP = (2S)-2-[5-amino-1-(5-phospho-beta-D-ribosyl)imidazole-4-carboxamido]succinate + ADP + phosphate + 2 H(+). The protein operates within purine metabolism; IMP biosynthesis via de novo pathway; 5-amino-1-(5-phospho-D-ribosyl)imidazole-4-carboxamide from 5-amino-1-(5-phospho-D-ribosyl)imidazole-4-carboxylate: step 1/2. The polypeptide is Phosphoribosylaminoimidazole-succinocarboxamide synthase (Roseobacter denitrificans (strain ATCC 33942 / OCh 114) (Erythrobacter sp. (strain OCh 114))).